Reading from the N-terminus, the 225-residue chain is 2-amino-5-formylamino-6-ribosylaminopyrimidin-4(3H)-one 5'-monophosphate deformylase (225 aa).

Positions 28, 30, 39, and 107 each coordinate Fe cation.

This sequence belongs to the creatininase superfamily. FAPy deformylase family. In terms of assembly, homodimer. Fe(2+) serves as cofactor. Zn(2+) is required as a cofactor.

The catalysed reaction is 2-amino-5-formylamino-6-(5-phospho-D-ribosylamino)pyrimidin-4(3H)-one + H2O = 2,5-diamino-6-(1-D-ribosylamino)pyrimidin-4(3H)-one 5'-phosphate + formate + H(+). Its pathway is cofactor biosynthesis; coenzyme F420 biosynthesis. The protein operates within cofactor biosynthesis; riboflavin biosynthesis. Its function is as follows. Catalyzes the hydrolysis of the formamide of 2-amino-5-formylamino-6-ribosylamino-4(3H)-pyrimidinone 5'-monophosphate (FAPy) to form 2,5-diamino-6-ribosylamino-4(3H)-pyrimidinone 5'-phosphate (APy). This Methanocaldococcus fervens (strain DSM 4213 / JCM 15782 / AG86) (Methanococcus fervens) protein is 2-amino-5-formylamino-6-ribosylaminopyrimidin-4(3H)-one 5'-monophosphate deformylase.